A 555-amino-acid chain; its full sequence is CTP synthase (555 aa).

The amidoligase domain stretch occupies residues 1–271 (MVKRGKKTKY…DDKLAELFNI (271 aa)). Serine 19 provides a ligand contact to CTP. Serine 19 is a UTP binding site. ATP contacts are provided by residues 20 to 25 (SLGKGL) and aspartate 77. Residues aspartate 77 and glutamate 145 each coordinate Mg(2+). CTP is bound by residues 152 to 154 (DIE), 192 to 197 (KTKPTQ), and lysine 228. UTP is bound by residues 192-197 (KTKPTQ) and lysine 228. One can recognise a Glutamine amidotransferase type-1 domain in the interval 297–537 (RIGIVGKYVE…VKAALEHRDA (241 aa)). Glycine 358 lines the L-glutamine pocket. The Nucleophile; for glutamine hydrolysis role is filled by cysteine 385. L-glutamine-binding positions include 386 to 389 (LGLQ), glutamate 409, and arginine 466. Catalysis depends on residues histidine 510 and glutamate 512. Positions 536 to 555 (DAQQRQPSAEVKKLPVGKNG) are disordered.

This sequence belongs to the CTP synthase family. In terms of assembly, homotetramer.

The catalysed reaction is UTP + L-glutamine + ATP + H2O = CTP + L-glutamate + ADP + phosphate + 2 H(+). It carries out the reaction L-glutamine + H2O = L-glutamate + NH4(+). It catalyses the reaction UTP + NH4(+) + ATP = CTP + ADP + phosphate + 2 H(+). The protein operates within pyrimidine metabolism; CTP biosynthesis via de novo pathway; CTP from UDP: step 2/2. With respect to regulation, allosterically activated by GTP, when glutamine is the substrate; GTP has no effect on the reaction when ammonia is the substrate. The allosteric effector GTP functions by stabilizing the protein conformation that binds the tetrahedral intermediate(s) formed during glutamine hydrolysis. Inhibited by the product CTP, via allosteric rather than competitive inhibition. Its function is as follows. Catalyzes the ATP-dependent amination of UTP to CTP with either L-glutamine or ammonia as the source of nitrogen. Regulates intracellular CTP levels through interactions with the four ribonucleotide triphosphates. The protein is CTP synthase of Anaeromyxobacter dehalogenans (strain 2CP-C).